The following is a 143-amino-acid chain: Nucleoside diphosphate kinase (143 aa).

ATP-binding residues include Lys-11, Phe-59, Arg-87, Thr-93, Arg-104, and Asn-114. His-117 acts as the Pros-phosphohistidine intermediate in catalysis.

The protein belongs to the NDK family. In terms of assembly, homotetramer. The cofactor is Mg(2+).

Its subcellular location is the cytoplasm. The catalysed reaction is a 2'-deoxyribonucleoside 5'-diphosphate + ATP = a 2'-deoxyribonucleoside 5'-triphosphate + ADP. It carries out the reaction a ribonucleoside 5'-diphosphate + ATP = a ribonucleoside 5'-triphosphate + ADP. Its function is as follows. Major role in the synthesis of nucleoside triphosphates other than ATP. The ATP gamma phosphate is transferred to the NDP beta phosphate via a ping-pong mechanism, using a phosphorylated active-site intermediate. In Idiomarina loihiensis (strain ATCC BAA-735 / DSM 15497 / L2-TR), this protein is Nucleoside diphosphate kinase.